Reading from the N-terminus, the 284-residue chain is Deoxyribonuclease-1 (284 aa).

An N-terminal signal peptide occupies residues 1-22 (MRYTGLMGTLLTLVNLLQLAGT). A glycan (N-linked (GlcNAc...) asparagine) is linked at Asn40. The active site involves Glu100. Cysteines 123 and 126 form a disulfide. Asn128 carries N-linked (GlcNAc...) asparagine glycosylation. His156 is a catalytic residue. Cys195 and Cys231 form a disulfide bridge.

This sequence belongs to the DNase I family. Ca(2+) is required as a cofactor. It depends on Mg(2+) as a cofactor. N-glycosylated. In terms of tissue distribution, highly expressed in the parotid and submandibular gland as well as in the kidney and duodenum (at protein level). Expressed at intermediate level in the ileum, mesenterial lymph nodes, liver, ventral prostate, epididymis, ovary and stomach (at protein level). Expressed at low level in the sublingual, preputial, coagulation and pituitary gland (at protein level). Also present in the lachrymal and thyroid glands, striated muscle, intestine, the urinary bladder and the eye.

Its subcellular location is the secreted. It localises to the zymogen granule. The protein resides in the nucleus envelope. The enzyme catalyses Endonucleolytic cleavage to 5'-phosphodinucleotide and 5'-phosphooligonucleotide end-products.. Its function is as follows. Serum endocuclease secreted into body fluids by a wide variety of exocrine and endocrine organs. Expressed by non-hematopoietic tissues and preferentially cleaves protein-free DNA. Among other functions, seems to be involved in cell death by apoptosis. Binds specifically to G-actin and blocks actin polymerization. Together with DNASE1L3, plays a key role in degrading neutrophil extracellular traps (NETs). NETs are mainly composed of DNA fibers and are released by neutrophils to bind pathogens during inflammation. Degradation of intravascular NETs by DNASE1 and DNASE1L3 is required to prevent formation of clots that obstruct blood vessels and cause organ damage following inflammation. In Mus musculus (Mouse), this protein is Deoxyribonuclease-1.